The following is a 127-amino-acid chain: Large ribosomal subunit protein bL12 (127 aa).

This sequence belongs to the bacterial ribosomal protein bL12 family. In terms of assembly, homodimer. Part of the ribosomal stalk of the 50S ribosomal subunit. Forms a multimeric L10(L12)X complex, where L10 forms an elongated spine to which 2 to 4 L12 dimers bind in a sequential fashion. Binds GTP-bound translation factors.

Its function is as follows. Forms part of the ribosomal stalk which helps the ribosome interact with GTP-bound translation factors. Is thus essential for accurate translation. The protein is Large ribosomal subunit protein bL12 of Pelobacter propionicus (strain DSM 2379 / NBRC 103807 / OttBd1).